Consider the following 447-residue polypeptide: Serine/threonine-protein phosphatase 2A 55 kDa regulatory subunit B gamma isoform (447 aa).

WD repeat units lie at residues 22 to 61, 87 to 128, 171 to 209, 220 to 260, 279 to 317, 334 to 375, and 410 to 446; these read TEAD…KNAP, EIEE…KRPE, GHTY…RSFN, DLTE…LCDK, EIIS…RPIE, ESDC…DVTL, and DFTK…NSDM.

It belongs to the phosphatase 2A regulatory subunit B family. In terms of assembly, PP2A consists of a common heterodimeric core enzyme, composed of a 36 kDa catalytic subunit (subunit C) and a 65 kDa constant regulatory subunit (PR65 or subunit A), that associates with a variety of regulatory subunits. Proteins that associate with the core dimer include three families of regulatory subunits B (the R2/B/PR55/B55, R3/B''/PR72/PR130/PR59 and R5/B'/B56 families), the 48 kDa variable regulatory subunit, viral proteins, and cell signaling molecules. Interacts with IER5.

Functionally, the B regulatory subunit might modulate substrate selectivity and catalytic activity, and might also direct the localization of the catalytic enzyme to a particular subcellular compartment. In Mus musculus (Mouse), this protein is Serine/threonine-protein phosphatase 2A 55 kDa regulatory subunit B gamma isoform (Ppp2r2c).